Here is a 155-residue protein sequence, read N- to C-terminus: Late embryogenesis abundant protein 2 (155 aa).

The interval 1–155 (MTSHDQSYRA…DKDHFPTNRH (155 aa)) is disordered. Basic and acidic residues-rich tracts occupy residues 11–21 (GEAKGRTEEKT) and 28–39 (IEDKAQAAKEKA). The segment covering 40-78 (QQAAQTAKDKTSQTAQAAKEKTQQTAQAAKDKTQQTTQA) has biased composition (low complexity). Repeat copies occupy residues 53 to 63 (TAQAAKEKTQQ) and 64 to 74 (TAQAAKDKTQQ). Residues 53–74 (TAQAAKEKTQQTAQAAKDKTQQ) are 2 X 11 AA approximate tandem repeats of T-A-Q-A-A-K-E-K-T-Q-Q. Residues 79-95 (TKEKAQDTTGRAKEKGS) are compositionally biased toward basic and acidic residues. A compositionally biased stretch (polar residues) spans 97–120 (MGQSTKETAQSGKDNSAGFLQQTG). Over residues 144–155 (DQDKDHFPTNRH) the composition is skewed to basic and acidic residues.

Belongs to the LEA type 4 family. Highest expression is found in seeds. No expression detected in adult tissues.

This chain is Late embryogenesis abundant protein 2, found in Cicer arietinum (Chickpea).